Here is a 440-residue protein sequence, read N- to C-terminus: Protein EFFECTOR OF TRANSCRIPTION (440 aa).

Positions 131 to 167 constitute a GIY-YIG domain; the sequence is SIQGLGVAVNIHDADDISHGQTESIRTRLRSYGRPVP. The interval 172 to 216 is disordered; that stretch reads LGDNASQTITQKKTGGRSKDKKHGFEEERDVSRVEAEENNTNSVH. The span at 175 to 184 shows a compositional bias: polar residues; that stretch reads NASQTITQKK. A compositionally biased stretch (basic and acidic residues) spans 194–207; it reads HGFEEERDVSRVEA. Cx9Cx9RCx2HK repeat units lie at residues 247-272 and 295-320; these read CGVL…TEHK and CGVI…EDHK. The segment at 339 to 363 is disordered; that stretch reads ILKEDKSKPKTRTSSTNQEEPGESL. 2 Cx9Cx9RCx2HK repeats span residues 365–390 and 409–434; these read CEAT…WQHK and CGVK…QEHK.

The protein resides in the nucleus. In terms of biological role, transcription regulator that negatively modulates gibberellin-mediated developmental processes. May act as transcriptional repressor of giberellin controlled genes. Binds DNA without sequence preference. The sequence is that of Protein EFFECTOR OF TRANSCRIPTION from Brassica napus (Rape).